Reading from the N-terminus, the 329-residue chain is GTP 3',8-cyclase (329 aa).

A Radical SAM core domain is found at 8–234 (AFARKFYYLR…QLRQRSDGPA (227 aa)). R17 is a binding site for GTP. [4Fe-4S] cluster is bound by residues C24 and C28. Position 30 (Y30) interacts with S-adenosyl-L-methionine. C31 contacts [4Fe-4S] cluster. Position 68 (R68) interacts with GTP. G72 is a binding site for S-adenosyl-L-methionine. GTP is bound at residue T99. S123 is a binding site for S-adenosyl-L-methionine. K160 is a GTP binding site. Position 194 (M194) interacts with S-adenosyl-L-methionine. [4Fe-4S] cluster contacts are provided by C257 and C260. 262-264 (RLR) contacts GTP. A [4Fe-4S] cluster-binding site is contributed by C274.

It belongs to the radical SAM superfamily. MoaA family. As to quaternary structure, monomer and homodimer. Requires [4Fe-4S] cluster as cofactor.

It catalyses the reaction GTP + AH2 + S-adenosyl-L-methionine = (8S)-3',8-cyclo-7,8-dihydroguanosine 5'-triphosphate + 5'-deoxyadenosine + L-methionine + A + H(+). It participates in cofactor biosynthesis; molybdopterin biosynthesis. Functionally, catalyzes the cyclization of GTP to (8S)-3',8-cyclo-7,8-dihydroguanosine 5'-triphosphate. The sequence is that of GTP 3',8-cyclase from Escherichia coli O45:K1 (strain S88 / ExPEC).